A 628-amino-acid chain; its full sequence is 1-deoxy-D-xylulose-5-phosphate synthase (628 aa).

Thiamine diphosphate is bound by residues H72 and G113–S115. D144 provides a ligand contact to Mg(2+). Residues G145–A146, N173, Y284, and E367 each bind thiamine diphosphate. N173 contacts Mg(2+).

The protein belongs to the transketolase family. DXPS subfamily. As to quaternary structure, homodimer. Mg(2+) is required as a cofactor. It depends on thiamine diphosphate as a cofactor.

It carries out the reaction D-glyceraldehyde 3-phosphate + pyruvate + H(+) = 1-deoxy-D-xylulose 5-phosphate + CO2. Its pathway is metabolic intermediate biosynthesis; 1-deoxy-D-xylulose 5-phosphate biosynthesis; 1-deoxy-D-xylulose 5-phosphate from D-glyceraldehyde 3-phosphate and pyruvate: step 1/1. Its function is as follows. Catalyzes the acyloin condensation reaction between C atoms 2 and 3 of pyruvate and glyceraldehyde 3-phosphate to yield 1-deoxy-D-xylulose-5-phosphate (DXP). The chain is 1-deoxy-D-xylulose-5-phosphate synthase from Exiguobacterium sibiricum (strain DSM 17290 / CCUG 55495 / CIP 109462 / JCM 13490 / 255-15).